The primary structure comprises 117 residues: Small ribosomal subunit protein bS6 (117 aa).

The tract at residues 97-117 (TEEPSAILTKKDDRRGRRERN) is disordered.

This sequence belongs to the bacterial ribosomal protein bS6 family.

Its function is as follows. Binds together with bS18 to 16S ribosomal RNA. The sequence is that of Small ribosomal subunit protein bS6 from Maricaulis maris (strain MCS10) (Caulobacter maris).